The chain runs to 150 residues: uncharacterized protein (150 aa).

It belongs to the Dps family.

This is an uncharacterized protein from Kitasatospora aureofaciens (Streptomyces aureofaciens).